The sequence spans 375 residues: Arabinose metabolism transcriptional repressor (375 aa).

Residues 1 to 70 enclose the HTH gntR-type domain; that stretch reads METKYNFVKQ…QGAGTFCADR (70 aa). Positions 30–49 form a DNA-binding region, H-T-H motif; that stretch reads ENELMKEYNVSRHTVRKAID.

It is found in the cytoplasm. Its function is as follows. Transcriptional repressor of the arabinose utilization genes. This Halalkalibacterium halodurans (strain ATCC BAA-125 / DSM 18197 / FERM 7344 / JCM 9153 / C-125) (Bacillus halodurans) protein is Arabinose metabolism transcriptional repressor (araR).